The chain runs to 669 residues: DNA mismatch repair protein MutL (669 aa).

A disordered region spans residues 356–377 (FEQRQNTENNQEKTFSSEESNS). Polar residues predominate over residues 361 to 377 (NTENNQEKTFSSEESNS).

It belongs to the DNA mismatch repair MutL/HexB family.

This protein is involved in the repair of mismatches in DNA. It is required for dam-dependent methyl-directed DNA mismatch repair. May act as a 'molecular matchmaker', a protein that promotes the formation of a stable complex between two or more DNA-binding proteins in an ATP-dependent manner without itself being part of a final effector complex. In Staphylococcus aureus (strain MSSA476), this protein is DNA mismatch repair protein MutL.